Reading from the N-terminus, the 289-residue chain is Probable aquaporin PIP2-6 (289 aa).

The residue at position 1 (M1) is an N-acetylmethionine. Topologically, residues 1–38 (MTKDELTEEESLSGKDYLDPPPVKTFEVRELKKWSFYR) are cytoplasmic. Residue T7 is modified to Phosphothreonine. S11 carries the phosphoserine modification. A helical membrane pass occupies residues 39–59 (AVIAEFIATLLFLYVTVLTVI). The Extracellular segment spans residues 60-80 (GFKSQTDINAGGGACASVGLL). Residues 81-101 (GISWAFGGMIFILVYCTAGIS) traverse the membrane as a helical segment. The Cytoplasmic portion of the chain corresponds to 102-124 (GGHINPAVTFGLFLASKVSLVRA). Residues 106–108 (NPA) carry the NPA 1 motif. The chain crosses the membrane as a helical span at residues 125–145 (VSYMVAQCLGATCGVGLVKVF). Residues 146–165 (QSTYYNRYGGGANMLSDGYN) are Extracellular-facing. Residues 166–186 (VGVGVGAEIIGTFVLVYTVFS) traverse the membrane as a helical segment. At 187 to 200 (ATDPKRNARDSHIP) the chain is on the cytoplasmic side. A helical transmembrane segment spans residues 201 to 221 (VLAPLPIGFSVFMVHLATIPI). At 222–248 (TGTGINPARSFGAAVIYNNQKAWDDQW) the chain is on the extracellular side. The NPA 2 motif lies at 227–229 (NPA). Residues 249-269 (IFWVGPFVGAAIAAFYHQFVL) form a helical membrane-spanning segment. Topologically, residues 270–289 (RAGAMKAYGSVRSQLHELHA) are cytoplasmic. Phosphoserine occurs at positions 279 and 282.

This sequence belongs to the MIP/aquaporin (TC 1.A.8) family. PIP (TC 1.A.8.11) subfamily. Expressed above ground, and in flower buds.

It localises to the cell membrane. In terms of biological role, aquaporins facilitate the transport of water and small neutral solutes across cell membranes. The sequence is that of Probable aquaporin PIP2-6 (PIP2-6) from Arabidopsis thaliana (Mouse-ear cress).